The primary structure comprises 112 residues: High mobility group protein D (112 aa).

The segment at residues 5 to 71 (PKRPLSAYML…DYDRAVKEFE (67 aa)) is a DNA-binding region (HMG box). Phosphoserine is present on S10. Y12 is modified (phosphotyrosine). The tract at residues 72–112 (ANGGSSAANGGGAKKRAKPAKKVAKKSKKEESDEDDDDESE) is disordered. The segment covering 84 to 98 (AKKRAKPAKKVAKKS) has biased composition (basic residues). Phosphoserine occurs at positions 103 and 111. Over residues 103–112 (SDEDDDDESE) the composition is skewed to acidic residues.

The protein belongs to the HMGB family.

Its subcellular location is the nucleus. It localises to the chromosome. Functionally, binds preferentially single-stranded DNA and unwinds double-stranded DNA. Prefers sites containing the sequence 5'-ttg-3'. Facilitates DNA bending. Associated with early embryonic chromatin in the absence of histone H1. This Drosophila melanogaster (Fruit fly) protein is High mobility group protein D (HmgD).